Here is a 675-residue protein sequence, read N- to C-terminus: DNA ligase (675 aa).

NAD(+)-binding positions include 36–40, 85–86, and Glu-117; these read DAAYD and SL. Catalysis depends on Lys-119, which acts as the N6-AMP-lysine intermediate. NAD(+)-binding residues include Arg-140, Glu-177, Lys-294, and Lys-318. The Zn(2+) site is built by Cys-412, Cys-415, Cys-430, and Cys-436. Residues 597–675 form the BRCT domain; that stretch reads AEDLPLSGNT…EAEFLELIGE (79 aa).

The protein belongs to the NAD-dependent DNA ligase family. LigA subfamily. Mg(2+) is required as a cofactor. The cofactor is Mn(2+).

It catalyses the reaction NAD(+) + (deoxyribonucleotide)n-3'-hydroxyl + 5'-phospho-(deoxyribonucleotide)m = (deoxyribonucleotide)n+m + AMP + beta-nicotinamide D-nucleotide.. Its function is as follows. DNA ligase that catalyzes the formation of phosphodiester linkages between 5'-phosphoryl and 3'-hydroxyl groups in double-stranded DNA using NAD as a coenzyme and as the energy source for the reaction. It is essential for DNA replication and repair of damaged DNA. The sequence is that of DNA ligase from Thioalkalivibrio sulfidiphilus (strain HL-EbGR7).